The chain runs to 447 residues: T-box transcription factor TBX20 (447 aa).

Residues 62-81 (DAHGEFGGGSGSSPSSSSLC) form a disordered region. Residues 109–288 (LWDKFHELGT…SNPFAKGFRD (180 aa)) constitute a DNA-binding region (T-box). The tract at residues 316–340 (TYGGEEDVLGDESQTTPNRGSAFTT) is disordered. Polar residues predominate over residues 327–340 (ESQTTPNRGSAFTT).

The protein resides in the nucleus. Functionally, acts as a transcriptional activator and repressor required for cardiac development and may have key roles in the maintenance of functional and structural phenotypes in adult heart. This chain is T-box transcription factor TBX20 (TBX20), found in Homo sapiens (Human).